Consider the following 198-residue polypeptide: Interferon gamma (198 aa).

An N-terminal signal peptide occupies residues 1–23 (MMVSTARAVVCLSLCLCVCQVRG). Asn31, Asn42, and Asn174 each carry an N-linked (GlcNAc...) asparagine glycan. The tract at residues 173-198 (SNNTKMQRRRRRRRRQARKVKTPTRA) is disordered. Residues 178-198 (MQRRRRRRRRQARKVKTPTRA) are compositionally biased toward basic residues.

It belongs to the type II (or gamma) interferon family. Homodimer.

Its subcellular location is the secreted. Cytokine which binds to interferon gamma receptor 1 (ifngr1). Also binds with lower affinity to interferon gamma receptor 1-like (ifngr1l). Has activating effects on macrophages and neutrophils. This chain is Interferon gamma, found in Paralichthys olivaceus (Bastard halibut).